Consider the following 641-residue polypeptide: Mediator of RNA polymerase II transcription subunit 17 (641 aa).

Residues 159–186 (RLQSFNAAADKLLKSAARLETEVASETR) are a coiled coil.

This sequence belongs to the Mediator complex subunit 17 family. Component of the Mediator complex.

The protein resides in the nucleus. Its function is as follows. Component of the Mediator complex, a coactivator involved in the regulated transcription of nearly all RNA polymerase II-dependent genes. Mediator functions as a bridge to convey information from gene-specific regulatory proteins to the basal RNA polymerase II transcription machinery. Mediator is recruited to promoters by direct interactions with regulatory proteins and serves as a scaffold for the assembly of a functional preinitiation complex with RNA polymerase II and the general transcription factors. The protein is Mediator of RNA polymerase II transcription subunit 17 (srb4) of Aspergillus clavatus (strain ATCC 1007 / CBS 513.65 / DSM 816 / NCTC 3887 / NRRL 1 / QM 1276 / 107).